The sequence spans 149 residues: Ribonuclease H (149 aa).

Residues 1 to 143 (MNQVVIYTDG…ADALANKGVD (143 aa)) form the RNase H type-1 domain. The Mg(2+) site is built by aspartate 9, glutamate 47, aspartate 69, and aspartate 135.

This sequence belongs to the RNase H family. As to quaternary structure, monomer. Requires Mg(2+) as cofactor.

The protein localises to the cytoplasm. It carries out the reaction Endonucleolytic cleavage to 5'-phosphomonoester.. Endonuclease that specifically degrades the RNA of RNA-DNA hybrids. In Paracidovorax citrulli (strain AAC00-1) (Acidovorax citrulli), this protein is Ribonuclease H.